Reading from the N-terminus, the 857-residue chain is ATP-dependent RNA helicase DDX24 (857 aa).

The disordered stretch occupies residues 61–179 (NPSRLFSSEE…SPKLPKKSKK (119 aa)). Residues serine 80 and serine 92 each carry the phosphoserine modification. A compositionally biased stretch (basic residues) spans 152-161 (PRKKKNKGKK). A Phosphoserine modification is found at serine 170. Residues 193-221 (SAWRDLFVPKAVLRALSFLGFSAPTPIQA) carry the Q motif motif. The Helicase ATP-binding domain maps to 225–528 (APAIRDKLDI…RILHKKHVKK (304 aa)). 238–245 (AETGSGKT) lines the ATP pocket. The tract at residues 279 to 363 (RFGATAHLGS…NEDGEEKFDA (85 aa)) is disordered. Phosphoserine is present on residues serine 288 and serine 296. Over residues 290 to 307 (CKDRTESGVLPEEARIET) the composition is skewed to basic and acidic residues. The segment covering 309–330 (AQPSDSGVQATPETSASASAQT) has biased composition (polar residues). Basic and acidic residues predominate over residues 345–363 (LEEKPVPKQNEDGEEKFDA). Lysine 370 is covalently cross-linked (Glycyl lysine isopeptide (Lys-Gly) (interchain with G-Cter in SUMO2)). A DEAD box motif is present at residues 471–474 (DEAD). Residues 576-723 (DLYLYYFLMQ…LFPVQSKYMD (148 aa)) enclose the Helicase C-terminal domain. A Glycyl lysine isopeptide (Lys-Gly) (interchain with G-Cter in SUMO2) cross-link involves residue lysine 624. Positions 808–857 (RYPTQSGRPPQPVLASRNIESALSCLSRQKRRRKKPKEPRAPPQPGSSTS) are disordered. The span at 825–834 (NIESALSCLS) shows a compositional bias: polar residues. The segment covering 835–844 (RQKRRRKKPK) has biased composition (basic residues). Positions 848–857 (APPQPGSSTS) are enriched in pro residues.

The protein belongs to the DEAD box helicase family. DDX24/MAK5 subfamily. As to quaternary structure, interacts with FADD. Interacts with RIPK1; this interaction disrupts RLR signaling activation of IFN-dependent transcription factor IRF7. Interacts with NIP7. Interacts with EP300; this interaction prevents TP53 acetylation mediated by EP300. Ubiquitinated by MDM2 without targeting DDX24 for proteasomal degradation. Instead, polyubiquitylated DDX24 promotes interaction with NIP7, a component of pre-rRNP processing complex, and associates with pre-rRNA molecules and pre-ribosomal particles.

The protein resides in the cytoplasm. It is found in the nucleus. The enzyme catalyses ATP + H2O = ADP + phosphate + H(+). ATP-dependent RNA helicase that plays a role in various aspects of RNA metabolism including pre-mRNA splicing and is thereby involved in different biological processes such as cell cycle regulation or innate immunity. Plays an inhibitory role in TP53 transcriptional activity and subsequently in TP53 controlled cell growth arrest and senescence by inhibiting its EP300 mediated acetylation. Negatively regulates cytosolic RNA-mediated innate immune signaling at least in part by affecting RIPK1/IRF7 interactions. Alternatively, possesses antiviral activity by recognizing gammaherpesvirus transcripts in the context of lytic reactivation. Plays an essential role in cell cycle regulation in vascular smooth muscle cells by interacting with and regulating FANCA (Fanconi anemia complementation group A) mRNA. This is ATP-dependent RNA helicase DDX24 (Ddx24) from Mus musculus (Mouse).